We begin with the raw amino-acid sequence, 355 residues long: S-adenosylmethionine:tRNA ribosyltransferase-isomerase (355 aa).

This sequence belongs to the QueA family. As to quaternary structure, monomer.

Its subcellular location is the cytoplasm. It carries out the reaction 7-aminomethyl-7-carbaguanosine(34) in tRNA + S-adenosyl-L-methionine = epoxyqueuosine(34) in tRNA + adenine + L-methionine + 2 H(+). It participates in tRNA modification; tRNA-queuosine biosynthesis. Its function is as follows. Transfers and isomerizes the ribose moiety from AdoMet to the 7-aminomethyl group of 7-deazaguanine (preQ1-tRNA) to give epoxyqueuosine (oQ-tRNA). This is S-adenosylmethionine:tRNA ribosyltransferase-isomerase from Pectobacterium carotovorum subsp. carotovorum (strain PC1).